Here is a 142-residue protein sequence, read N- to C-terminus: Large ribosomal subunit protein uL13 (142 aa).

This sequence belongs to the universal ribosomal protein uL13 family. In terms of assembly, part of the 50S ribosomal subunit.

In terms of biological role, this protein is one of the early assembly proteins of the 50S ribosomal subunit, although it is not seen to bind rRNA by itself. It is important during the early stages of 50S assembly. This Francisella tularensis subsp. mediasiatica (strain FSC147) protein is Large ribosomal subunit protein uL13.